Consider the following 182-residue polypeptide: Large ribosomal subunit protein uL5 (182 aa).

Belongs to the universal ribosomal protein uL5 family. As to quaternary structure, part of the 50S ribosomal subunit; part of the 5S rRNA/L5/L18/L25 subcomplex. Contacts the 5S rRNA and the P site tRNA. Forms a bridge to the 30S subunit in the 70S ribosome.

This is one of the proteins that bind and probably mediate the attachment of the 5S RNA into the large ribosomal subunit, where it forms part of the central protuberance. In the 70S ribosome it contacts protein S13 of the 30S subunit (bridge B1b), connecting the 2 subunits; this bridge is implicated in subunit movement. Contacts the P site tRNA; the 5S rRNA and some of its associated proteins might help stabilize positioning of ribosome-bound tRNAs. The protein is Large ribosomal subunit protein uL5 of Borrelia garinii subsp. bavariensis (strain ATCC BAA-2496 / DSM 23469 / PBi) (Borreliella bavariensis).